We begin with the raw amino-acid sequence, 192 residues long: Beta-glucosidase (192 aa).

Belongs to the glycosyl hydrolase 3 family.

It catalyses the reaction Hydrolysis of terminal, non-reducing beta-D-glucosyl residues with release of beta-D-glucose.. It functions in the pathway glycan metabolism; cellulose degradation. The protein is Beta-glucosidase of Schizophyllum commune (Split gill fungus).